We begin with the raw amino-acid sequence, 424 residues long: Deoxyguanosinetriphosphate triphosphohydrolase-like protein (424 aa).

Pro residues predominate over residues 1–10; it reads MEGTAPPTPY. A disordered region spans residues 1–31; it reads MEGTAPPTPYDPASVARYAPEPDKRPGRTAF. Basic and acidic residues predominate over residues 20 to 31; that stretch reads PEPDKRPGRTAF. Residues 70–220 form the HD domain; the sequence is RLTHSLECAQ…MDWADDVAYS (151 aa).

The protein belongs to the dGTPase family. Type 2 subfamily.

This chain is Deoxyguanosinetriphosphate triphosphohydrolase-like protein, found in Streptomyces coelicolor (strain ATCC BAA-471 / A3(2) / M145).